Consider the following 225-residue polypeptide: GrpE protein homolog 2, mitochondrial (225 aa).

Residues 1–32 (MAVRSLWAGRLRVQRLLAWSAAWESKGWPLPF) constitute a mitochondrion transit peptide. N6-acetyllysine is present on K142.

Belongs to the GrpE family. Probable component of the PAM complex at least composed of a mitochondrial HSP70 protein, GRPEL1 or GRPEL2, TIMM44, TIMM16/PAM16 and TIMM14/DNAJC19.

It localises to the mitochondrion matrix. Its function is as follows. Essential component of the PAM complex, a complex required for the translocation of transit peptide-containing proteins from the inner membrane into the mitochondrial matrix in an ATP-dependent manner. Seems to control the nucleotide-dependent binding of mitochondrial HSP70 to substrate proteins. Stimulates ATPase activity of mt-HSP70. May also serve to modulate the interconversion of oligomeric (inactive) and monomeric (active) forms of mt-HSP70. This is GrpE protein homolog 2, mitochondrial (GRPEL2) from Homo sapiens (Human).